Here is a 335-residue protein sequence, read N- to C-terminus: Tetraacyldisaccharide 4'-kinase (335 aa).

58–65 contacts ATP; that stretch reads TMGGAGKT.

This sequence belongs to the LpxK family.

It catalyses the reaction a lipid A disaccharide + ATP = a lipid IVA + ADP + H(+). Its pathway is glycolipid biosynthesis; lipid IV(A) biosynthesis; lipid IV(A) from (3R)-3-hydroxytetradecanoyl-[acyl-carrier-protein] and UDP-N-acetyl-alpha-D-glucosamine: step 6/6. In terms of biological role, transfers the gamma-phosphate of ATP to the 4'-position of a tetraacyldisaccharide 1-phosphate intermediate (termed DS-1-P) to form tetraacyldisaccharide 1,4'-bis-phosphate (lipid IVA). The chain is Tetraacyldisaccharide 4'-kinase from Caulobacter vibrioides (strain ATCC 19089 / CIP 103742 / CB 15) (Caulobacter crescentus).